The chain runs to 456 residues: 3-isopropylmalate dehydratase large subunit (456 aa).

Cys336, Cys396, and Cys399 together coordinate [4Fe-4S] cluster.

Belongs to the aconitase/IPM isomerase family. LeuC type 1 subfamily. In terms of assembly, heterodimer of LeuC and LeuD. [4Fe-4S] cluster serves as cofactor.

It catalyses the reaction (2R,3S)-3-isopropylmalate = (2S)-2-isopropylmalate. It participates in amino-acid biosynthesis; L-leucine biosynthesis; L-leucine from 3-methyl-2-oxobutanoate: step 2/4. Functionally, catalyzes the isomerization between 2-isopropylmalate and 3-isopropylmalate, via the formation of 2-isopropylmaleate. The protein is 3-isopropylmalate dehydratase large subunit of Staphylococcus aureus (strain MW2).